The chain runs to 366 residues: Aminomethyltransferase (366 aa).

Belongs to the GcvT family. The glycine cleavage system is composed of four proteins: P, T, L and H.

The catalysed reaction is N(6)-[(R)-S(8)-aminomethyldihydrolipoyl]-L-lysyl-[protein] + (6S)-5,6,7,8-tetrahydrofolate = N(6)-[(R)-dihydrolipoyl]-L-lysyl-[protein] + (6R)-5,10-methylene-5,6,7,8-tetrahydrofolate + NH4(+). In terms of biological role, the glycine cleavage system catalyzes the degradation of glycine. This is Aminomethyltransferase from Thermosynechococcus vestitus (strain NIES-2133 / IAM M-273 / BP-1).